A 78-amino-acid polypeptide reads, in one-letter code: Large ribosomal subunit protein bL28 (78 aa).

The segment at 1–31 (MAAHCQVTGAEPGFGHSISHSHRRNKRRFDP) is disordered.

The protein belongs to the bacterial ribosomal protein bL28 family.

The protein is Large ribosomal subunit protein bL28 of Pseudarthrobacter chlorophenolicus (strain ATCC 700700 / DSM 12829 / CIP 107037 / JCM 12360 / KCTC 9906 / NCIMB 13794 / A6) (Arthrobacter chlorophenolicus).